The primary structure comprises 488 residues: MNLEETMPLVFERSIPGRIGFSLPESDVPETKASDYFEQAYIRSVPADLPELSELEIMRHYTNLSNHNFGVDSGFYPLGSCTMKYNPKINEKVARFPGFANIHPNQPESSVQGALELLYDLQTSLVEITGMDEVTLQPAAGAHGEWTGLMLIRAFHEKNGDTKRTKVIIPDSAHGTNPASAAVAGFDVVTVKSNEKGLVDVADLKKVVGEDTAALMLTNPNTLGLFEKDIVEMAEIVHEAGGKLYYDGANLNAIMAKVRPGDMGFDVVHLNLHKTFTGPHGGGGPGSGPIGVKKELIPFLPTPVLTKKEEGYTFDYNYPDSIGRVKPYYGNFGINVRAYTYIRTMGPDGLKLVTEYAVLNANYMMRKLQEAYDLPFDQVCKHEFVLSGNRQKKLGVRTVDIAKRLLDHNFHPPTVYFPLIVGEAIMIEPTETESKETLDSFIDTMLKIAKEAEENPEIVQEAPHSTYVKRLDETRAARKPILRYQKEV.

Lys-274 carries the N6-(pyridoxal phosphate)lysine modification.

The protein belongs to the GcvP family. C-terminal subunit subfamily. In terms of assembly, the glycine cleavage system is composed of four proteins: P, T, L and H. In this organism, the P 'protein' is a heterodimer of two subunits. Requires pyridoxal 5'-phosphate as cofactor.

It carries out the reaction N(6)-[(R)-lipoyl]-L-lysyl-[glycine-cleavage complex H protein] + glycine + H(+) = N(6)-[(R)-S(8)-aminomethyldihydrolipoyl]-L-lysyl-[glycine-cleavage complex H protein] + CO2. Its function is as follows. The glycine cleavage system catalyzes the degradation of glycine. The P protein binds the alpha-amino group of glycine through its pyridoxal phosphate cofactor; CO(2) is released and the remaining methylamine moiety is then transferred to the lipoamide cofactor of the H protein. The sequence is that of Probable glycine dehydrogenase (decarboxylating) subunit 2 from Listeria monocytogenes serotype 4b (strain F2365).